Reading from the N-terminus, the 391-residue chain is Tumor susceptibility gene 101 protein (391 aa).

N-acetylalanine is present on A2. A UEV domain is found at 2 to 145 (AVSESQLKKM…GEEPPVFSRP (144 aa)). Residues 159-163 (PPNTS) form an interaction with CEP55 region. The disordered stretch occupies residues 197-220 (YPATTSSQYPSQPPVTTVGPSRDG). Positions 200–215 (TTSSQYPSQPPVTTVG) are enriched in polar residues. T221 is modified (phosphothreonine). The stretch at 237-317 (DKLRWRMKEE…NQSENNDIDE (81 aa)) forms a coiled coil. Positions 321 to 324 (PTAP) match the PTAP/PSAP motif motif. An SB domain is found at 323–391 (APLYKQILNL…RKTAGLSDLY (69 aa)).

It belongs to the ubiquitin-conjugating enzyme family. UEV subfamily. Component of the ESCRT-I complex (endosomal sorting complex required for transport I) which consists of TSG101, VPS28, a VPS37 protein (VPS37A to -D) and MVB12A or MVB12B in a 1:1:1:1 stoichiometry. Interacts with VPS37A, VPS37B and VPS37C. Component of an ESCRT-I complex (endosomal sorting complex required for transport I) which consists of TSG101, VPS28, VPS37A and UBAP1 in a 1:1:1:1 stoichiometry. Interacts with DMAP1. Interacts with GMCL. Interacts with ubiquitin, stathmin and AATF. Interacts with HGS; the interaction mediates the association with the ESCRT-0 complex. Interacts with GGA1 and GGA3. Interacts (via UEV domain) with PDCD6IP/AIP1. Interacts with VPS28, SNF8 and VPS36. Self-associates. Interacts with MVB12A; the association appears to be mediated by the TSG101-VPS37 binary subcomplex. Interacts with VPS37D. Interacts with LRSAM1. Interacts with CEP55; the interaction is required for cytokinesis. Interacts with PDCD6. Interacts with LITAF. Interacts with murine leukemia virus Gag polyprotein (via PSAP motif). Interacts with MGRN1. Interacts with ARRDC1; recruits TSG101 to the plasma membrane. Monoubiquitinated at multiple sites by LRSAM1 and by MGRN1. Ubiquitination inactivates it, possibly by regulating its shuttling between an active membrane-bound protein and an inactive soluble form. Ubiquitination by MGRN1 requires the presence of UBE2D1. Ubiquitous. Higher expression in brain and mammary gland. Lower expression in liver and tumoral tissues.

The protein resides in the cytoplasm. It localises to the early endosome membrane. Its subcellular location is the late endosome membrane. It is found in the cytoskeleton. The protein localises to the microtubule organizing center. The protein resides in the centrosome. It localises to the midbody. Its subcellular location is the midbody ring. It is found in the nucleus. Component of the ESCRT-I complex, a regulator of vesicular trafficking process. Binds to ubiquitinated cargo proteins and is required for the sorting of endocytic ubiquitinated cargos into multivesicular bodies (MVBs). Mediates the association between the ESCRT-0 and ESCRT-I complex. Required for completion of cytokinesis; the function requires CEP55. May be involved in cell growth and differentiation. Acts as a negative growth regulator. Required for the exosomal release of SDCBP, CD63 and syndecan. It may also play a role in the extracellular release of microvesicles that differ from the exosomes. The chain is Tumor susceptibility gene 101 protein (Tsg101) from Mus musculus (Mouse).